The sequence spans 362 residues: Cytochrome c peroxidase, mitochondrial (362 aa).

The transit peptide at 1–40 (MASASRQILRAASRASTRTAFAPAASRGLAARTIAGRRFY) directs the protein to the mitochondrion. The active-site Proton acceptor is the histidine 121. A heme b-binding site is contributed by histidine 244. Tryptophan 260 acts as the Tryptophan radical intermediate in catalysis.

It belongs to the peroxidase family. Cytochrome c peroxidase subfamily. In terms of assembly, forms a one-to-one complex with cytochrome c. Heme b is required as a cofactor.

The protein resides in the mitochondrion matrix. The protein localises to the mitochondrion intermembrane space. It catalyses the reaction 2 Fe(II)-[cytochrome c] + H2O2 + 2 H(+) = 2 Fe(III)-[cytochrome c] + 2 H2O. In terms of biological role, destroys radicals which are normally produced within the cells and which are toxic to biological systems. This chain is Cytochrome c peroxidase, mitochondrial (CCP1), found in Pyricularia oryzae (strain 70-15 / ATCC MYA-4617 / FGSC 8958) (Rice blast fungus).